The primary structure comprises 198 residues: Recombination protein RecR (198 aa).

A C4-type zinc finger spans residues 57-72 (CLNCGCLTDEAACYFC). The 96-residue stretch at 80-175 (QIICVTAFPR…QISRLAFGLP (96 aa)) folds into the Toprim domain.

Belongs to the RecR family.

Functionally, may play a role in DNA repair. It seems to be involved in an RecBC-independent recombinational process of DNA repair. It may act with RecF and RecO. This Protochlamydia amoebophila (strain UWE25) protein is Recombination protein RecR.